A 137-amino-acid chain; its full sequence is ATP synthase epsilon chain (137 aa).

It belongs to the ATPase epsilon chain family. In terms of assembly, F-type ATPases have 2 components, CF(1) - the catalytic core - and CF(0) - the membrane proton channel. CF(1) has five subunits: alpha(3), beta(3), gamma(1), delta(1), epsilon(1). CF(0) has three main subunits: a, b and c.

It is found in the cellular thylakoid membrane. Its function is as follows. Produces ATP from ADP in the presence of a proton gradient across the membrane. In Synechococcus elongatus (strain ATCC 33912 / PCC 7942 / FACHB-805) (Anacystis nidulans R2), this protein is ATP synthase epsilon chain (atpC).